The sequence spans 76 residues: uncharacterized protein (76 aa).

This is an uncharacterized protein from Sulfolobus islandicus filamentous virus (isolate Iceland/Hveragerdi) (SIFV).